The following is a 349-amino-acid chain: uncharacterized protein (349 aa).

A run of 10 helical transmembrane segments spans residues Val15–Thr35, Ile53–Ile73, Trp91–Ser111, Asn120–Leu140, Leu147–Val167, Phe179–Leu199, Leu218–Met238, Trp248–Leu268, Ile276–Leu296, and Ala302–Leu322. EamA domains lie at Ile39 to Phe164 and Phe191 to Ile319.

This sequence belongs to the EamA transporter family.

The protein localises to the cell membrane. This is an uncharacterized protein from Synechocystis sp. (strain ATCC 27184 / PCC 6803 / Kazusa).